The sequence spans 625 residues: PTS system beta-glucoside-specific EIIBCA component (625 aa).

One can recognise a PTS EIIB type-1 domain in the interval 1 to 84; it reads MTELARKIVA…NSVAGLDEKA (84 aa). Residues 1-99 lie on the Periplasmic side of the membrane; sequence MTELARKIVA…NDDKGNLLNR (99 aa). Cys24 serves as the catalytic Phosphocysteine intermediate; for EIIB activity. Residues 100–120 traverse the membrane as a helical segment; sequence FVYVISGIFTPLIGLMAATGI. The 364-residue stretch at 102-465 folds into the PTS EIIC type-1 domain; sequence YVISGIFTPL…RQPAQGAPQE (364 aa). Over 121–140 the chain is Cytoplasmic; sequence LKGMLALALTFQWTTEQSGT. A helical membrane pass occupies residues 141-161; the sequence is YLILFSASDALFWFFPIILGY. The Periplasmic portion of the chain corresponds to 162–166; it reads TAGKR. A helical membrane pass occupies residues 167-187; it reads FGGNPFTAMVIGGALVHPLIL. At 188 to 202 the chain is on the cytoplasmic side; it reads TAFENGQKADALGLD. The helical transmembrane segment at 203 to 223 threads the bilayer; it reads FLGIPVTLLNYSSSVIPIIFS. The Periplasmic segment spans residues 224–244; sequence AWLCSILERRLNAWLPSAIKN. The chain crosses the membrane as a helical span at residues 245 to 265; sequence FFTPLLCLMVITPVTFLLVGP. Residues 266–284 lie on the Cytoplasmic side of the membrane; sequence LSTWISELIAAGYLWLYQA. Residues 285 to 305 form a helical membrane-spanning segment; that stretch reads VPAFAGAVMGGFWQIFVMFGL. The Periplasmic portion of the chain corresponds to 306–324; that stretch reads HWGLVPLCINNFTVLGYDT. The chain crosses the membrane as a helical span at residues 325 to 345; that stretch reads MIPLLMPAIMAQVGAALGVFL. The Cytoplasmic segment spans residues 346–353; that stretch reads CERDAQKK. A helical membrane pass occupies residues 354-374; that stretch reads VVAGSAALTSLFGITEPAVYG. Over 375 to 380 the chain is Periplasmic; the sequence is VNLPRK. Residues 381 to 401 traverse the membrane as a helical segment; the sequence is YPFVIACISGALGATIIGYAQ. The Cytoplasmic portion of the chain corresponds to 402 to 403; that stretch reads TK. A helical transmembrane segment spans residues 404 to 424; it reads VYSFGLPSIFTFMQTIPSTGI. Residues 425 to 431 are Periplasmic-facing; the sequence is DFTVWAS. A helical transmembrane segment spans residues 432-452; sequence VIGGVIAIGCAFVGTVMLHFI. The Cytoplasmic portion of the chain corresponds to 453 to 625; sequence TAKRQPAQGA…AGEPLLSIIR (173 aa). Residues 495-599 form the PTS EIIA type-1 domain; sequence DTTFASGLLG…DLTTPVLISN (105 aa). His547 (tele-phosphohistidine intermediate; for EIIA activity) is an active-site residue.

Its subcellular location is the cell inner membrane. The phosphoenolpyruvate-dependent sugar phosphotransferase system (sugar PTS), a major carbohydrate active -transport system, catalyzes the phosphorylation of incoming sugar substrates concomitantly with their translocation across the cell membrane. This system is involved in beta-glucoside transport. In terms of biological role, acts both as a kinase and as a phosphatase on BglG. In Escherichia coli (strain K12), this protein is PTS system beta-glucoside-specific EIIBCA component (bglF).